The primary structure comprises 217 residues: 3,4-dihydroxy-2-butanone 4-phosphate synthase (217 aa).

D-ribulose 5-phosphate contacts are provided by residues 37 to 38 (RE), Asp-42, 150 to 154 (RRGHT), and Glu-174. Glu-38 is a binding site for Mg(2+). A Mg(2+)-binding site is contributed by His-153.

This sequence belongs to the DHBP synthase family. In terms of assembly, homodimer. It depends on Mg(2+) as a cofactor. Requires Mn(2+) as cofactor.

The enzyme catalyses D-ribulose 5-phosphate = (2S)-2-hydroxy-3-oxobutyl phosphate + formate + H(+). It participates in cofactor biosynthesis; riboflavin biosynthesis; 2-hydroxy-3-oxobutyl phosphate from D-ribulose 5-phosphate: step 1/1. Catalyzes the conversion of D-ribulose 5-phosphate to formate and 3,4-dihydroxy-2-butanone 4-phosphate. In Yersinia enterocolitica serotype O:8 / biotype 1B (strain NCTC 13174 / 8081), this protein is 3,4-dihydroxy-2-butanone 4-phosphate synthase.